Consider the following 285-residue polypeptide: Probable endonuclease 4 (285 aa).

9 residues coordinate Zn(2+): H69, H109, E145, D179, H182, H216, D229, H231, and E261.

The protein belongs to the AP endonuclease 2 family. The cofactor is Zn(2+).

The catalysed reaction is Endonucleolytic cleavage to 5'-phosphooligonucleotide end-products.. Endonuclease IV plays a role in DNA repair. It cleaves phosphodiester bonds at apurinic or apyrimidinic (AP) sites, generating a 3'-hydroxyl group and a 5'-terminal sugar phosphate. The sequence is that of Probable endonuclease 4 from Salmonella typhimurium (strain LT2 / SGSC1412 / ATCC 700720).